Reading from the N-terminus, the 199-residue chain is VPKRDLISQNIESRYEKLEFLDLAVWGKEKKQKYLLSTDNISFYCYFDTSKTSESERKHTFHSDNKQLNSIVDLIIKHSEKTKNIKEELEKYSQFLDKILDLKPTKKQVEKLLENQNLISKNFDYIKEQNTQLEKSLRKTVKLEDSINTLLVEIQQARPKEVELRTLKIAEQNSKAIEKFEQEIKDLREILEFLKHQAT.

This Rice tungro bacilliform virus (isolate Philippines) (RTBV) protein is Protein P1.